The sequence spans 226 residues: Endonuclease V (226 aa).

Residues D43 and D109 each coordinate Mg(2+).

It belongs to the endonuclease V family. The cofactor is Mg(2+).

The protein localises to the cytoplasm. It carries out the reaction Endonucleolytic cleavage at apurinic or apyrimidinic sites to products with a 5'-phosphate.. DNA repair enzyme involved in the repair of deaminated bases. Selectively cleaves double-stranded DNA at the second phosphodiester bond 3' to a deoxyinosine leaving behind the intact lesion on the nicked DNA. This is Endonuclease V from Kosmotoga olearia (strain ATCC BAA-1733 / DSM 21960 / TBF 19.5.1).